Consider the following 133-residue polypeptide: Large-conductance mechanosensitive channel (133 aa).

Helical transmembrane passes span 10 to 30 and 76 to 96; these read FAMK…TAFG and GNFI…FCVI.

This sequence belongs to the MscL family. In terms of assembly, homopentamer.

The protein resides in the cell inner membrane. In terms of biological role, channel that opens in response to stretch forces in the membrane lipid bilayer. May participate in the regulation of osmotic pressure changes within the cell. This Campylobacter curvus (strain 525.92) protein is Large-conductance mechanosensitive channel.